We begin with the raw amino-acid sequence, 180 residues long: Large ribosomal subunit protein uL22 (180 aa).

Residues 111 to 180 are disordered; the sequence is VVVESRPAKD…ETSDAKGGSD (70 aa). The span at 142-166 shows a compositional bias: basic residues; that stretch reads PAKKAPAKKAPAKKAPAKTAAKKTP. Residues 171 to 180 are compositionally biased toward basic and acidic residues; it reads ETSDAKGGSD.

This sequence belongs to the universal ribosomal protein uL22 family. Part of the 50S ribosomal subunit.

In terms of biological role, this protein binds specifically to 23S rRNA; its binding is stimulated by other ribosomal proteins, e.g. L4, L17, and L20. It is important during the early stages of 50S assembly. It makes multiple contacts with different domains of the 23S rRNA in the assembled 50S subunit and ribosome. Functionally, the globular domain of the protein is located near the polypeptide exit tunnel on the outside of the subunit, while an extended beta-hairpin is found that lines the wall of the exit tunnel in the center of the 70S ribosome. This Mycobacterium avium (strain 104) protein is Large ribosomal subunit protein uL22.